The following is a 636-amino-acid chain: 1-deoxy-D-xylulose-5-phosphate synthase (636 aa).

Thiamine diphosphate is bound by residues His74 and Gly115–Ala117. Position 146 (Asp146) interacts with Mg(2+). Thiamine diphosphate is bound by residues Gly147 to Ala148, Asn175, Tyr285, and Glu368. A Mg(2+)-binding site is contributed by Asn175.

The protein belongs to the transketolase family. DXPS subfamily. Homodimer. It depends on Mg(2+) as a cofactor. Thiamine diphosphate serves as cofactor.

It carries out the reaction D-glyceraldehyde 3-phosphate + pyruvate + H(+) = 1-deoxy-D-xylulose 5-phosphate + CO2. It functions in the pathway metabolic intermediate biosynthesis; 1-deoxy-D-xylulose 5-phosphate biosynthesis; 1-deoxy-D-xylulose 5-phosphate from D-glyceraldehyde 3-phosphate and pyruvate: step 1/1. In terms of biological role, catalyzes the acyloin condensation reaction between C atoms 2 and 3 of pyruvate and glyceraldehyde 3-phosphate to yield 1-deoxy-D-xylulose-5-phosphate (DXP). The protein is 1-deoxy-D-xylulose-5-phosphate synthase of Anaeromyxobacter dehalogenans (strain 2CP-C).